Consider the following 96-residue polypeptide: Antigen H4 (96 aa).

Residues 1–20 (EFQEEIKEGVEEHKHEDDPE) form a disordered region. Asn34 carries an N-linked (GlcNAc...) asparagine glycan.

The protein is Antigen H4 (H4) of Toxoplasma gondii.